We begin with the raw amino-acid sequence, 270 residues long: Phosphatidylglycerol--prolipoprotein diacylglyceryl transferase (270 aa).

4 helical membrane passes run 18–38 (IAVH…LWLA), 55–75 (LVLF…VIFQ), 89–109 (IWNG…TGII), and 115–135 (GLSF…GQAI). Arginine 137 is a binding site for a 1,2-diacyl-sn-glycero-3-phospho-(1'-sn-glycerol). Helical transmembrane passes span 177-197 (QPTF…LLLL), 205-225 (GELF…IEGL), and 236-256 (LRIA…LIAY).

This sequence belongs to the Lgt family.

Its subcellular location is the cell membrane. The enzyme catalyses L-cysteinyl-[prolipoprotein] + a 1,2-diacyl-sn-glycero-3-phospho-(1'-sn-glycerol) = an S-1,2-diacyl-sn-glyceryl-L-cysteinyl-[prolipoprotein] + sn-glycerol 1-phosphate + H(+). The protein operates within protein modification; lipoprotein biosynthesis (diacylglyceryl transfer). Catalyzes the transfer of the diacylglyceryl group from phosphatidylglycerol to the sulfhydryl group of the N-terminal cysteine of a prolipoprotein, the first step in the formation of mature lipoproteins. The chain is Phosphatidylglycerol--prolipoprotein diacylglyceryl transferase from Bacillus licheniformis (strain ATCC 14580 / DSM 13 / JCM 2505 / CCUG 7422 / NBRC 12200 / NCIMB 9375 / NCTC 10341 / NRRL NRS-1264 / Gibson 46).